A 463-amino-acid chain; its full sequence is Chromosomal replication initiator protein DnaA (463 aa).

Residues 1–84 are domain I, interacts with DnaA modulators; that stretch reads MNTNQIILTN…QLFQHYNNAI (84 aa). The domain II stretch occupies residues 84–124; it reads IKTVEIITKELPASNQATLELPTKTFADIGSSELNSENIFS. The segment at 125 to 343 is domain III, AAA+ region; that stretch reads TFDIRFTFDN…GALNKVIAHS (219 aa). Residues Gly171, Gly173, Lys174, and Thr175 each coordinate ATP. Positions 344 to 463 are domain IV, binds dsDNA; sequence NFTAKEITLE…INLMMKILQN (120 aa).

This sequence belongs to the DnaA family. In terms of assembly, oligomerizes as a right-handed, spiral filament on DNA at oriC.

It is found in the cytoplasm. Functionally, plays an essential role in the initiation and regulation of chromosomal replication. ATP-DnaA binds to the origin of replication (oriC) to initiate formation of the DNA replication initiation complex once per cell cycle. Binds the DnaA box (a 9 base pair repeat at the origin) and separates the double-stranded (ds)DNA. Forms a right-handed helical filament on oriC DNA; dsDNA binds to the exterior of the filament while single-stranded (ss)DNA is stabiized in the filament's interior. The ATP-DnaA-oriC complex binds and stabilizes one strand of the AT-rich DNA unwinding element (DUE), permitting loading of DNA polymerase. After initiation quickly degrades to an ADP-DnaA complex that is not apt for DNA replication. Binds acidic phospholipids. The chain is Chromosomal replication initiator protein DnaA from Rickettsia bellii (strain OSU 85-389).